Consider the following 366-residue polypeptide: Carboxy-cis,cis-muconate cyclase (366 aa).

Residues His149, Arg197, Glu213, and Arg275 contribute to the active site.

It belongs to the cycloisomerase 2 family. Homotetramer.

The enzyme catalyses 3-carboxy-2,5-dihydro-5-oxofuran-2-acetate = 3-carboxy-cis,cis-muconate. It functions in the pathway aromatic compound metabolism; beta-ketoadipate pathway; 3-carboxy-cis,cis-muconate from 3-carboxy-2,5-dihydro-5-oxofuran-2-acetate: step 1/1. Functionally, catalyzes a syn cycloisomerization. Also possesses mle activity. The chain is Carboxy-cis,cis-muconate cyclase from Neurospora crassa (strain ATCC 24698 / 74-OR23-1A / CBS 708.71 / DSM 1257 / FGSC 987).